We begin with the raw amino-acid sequence, 79 residues long: Small ribosomal subunit protein bS18B (79 aa).

The protein belongs to the bacterial ribosomal protein bS18 family. As to quaternary structure, part of the 30S ribosomal subunit. Forms a tight heterodimer with protein bS6.

Functionally, binds as a heterodimer with protein bS6 to the central domain of the 16S rRNA, where it helps stabilize the platform of the 30S subunit. The sequence is that of Small ribosomal subunit protein bS18B from Mycolicibacterium gilvum (strain PYR-GCK) (Mycobacterium gilvum (strain PYR-GCK)).